A 463-amino-acid polypeptide reads, in one-letter code: Glycine--tRNA ligase (463 aa).

Substrate is bound by residues R98 and E174. ATP-binding positions include 206 to 208, 216 to 221, 290 to 291, and 334 to 337; these read RNE, FRTREF, EL, and GADR. 221–225 provides a ligand contact to substrate; it reads FEQME. 330–334 contacts substrate; that stretch reads EPSLG.

Belongs to the class-II aminoacyl-tRNA synthetase family. Homodimer.

It is found in the cytoplasm. It carries out the reaction tRNA(Gly) + glycine + ATP = glycyl-tRNA(Gly) + AMP + diphosphate. In terms of biological role, catalyzes the attachment of glycine to tRNA(Gly). This is Glycine--tRNA ligase from Staphylococcus saprophyticus subsp. saprophyticus (strain ATCC 15305 / DSM 20229 / NCIMB 8711 / NCTC 7292 / S-41).